The following is an 874-amino-acid chain: Bifunctional uridylyltransferase/uridylyl-removing enzyme (874 aa).

Positions 1–332 (MTLQSPLTFR…NGGASEDAEI (332 aa)) are uridylyltransferase. The segment at 333 to 692 (IDEDFQRRGA…ISKKATRGGT (360 aa)) is uridylyl-removing. One can recognise an HD domain in the interval 451–573 (VDEHSIRLLK…VRDEEYLEYL (123 aa)). ACT domains lie at 693 to 777 (EVFV…RTPN) and 800 to 874 (LMEF…SVSA).

This sequence belongs to the GlnD family. The cofactor is Mg(2+).

It carries out the reaction [protein-PII]-L-tyrosine + UTP = [protein-PII]-uridylyl-L-tyrosine + diphosphate. It catalyses the reaction [protein-PII]-uridylyl-L-tyrosine + H2O = [protein-PII]-L-tyrosine + UMP + H(+). Uridylyltransferase (UTase) activity is inhibited by glutamine, while glutamine activates uridylyl-removing (UR) activity. Functionally, modifies, by uridylylation and deuridylylation, the PII regulatory proteins (GlnB and homologs), in response to the nitrogen status of the cell that GlnD senses through the glutamine level. Under low glutamine levels, catalyzes the conversion of the PII proteins and UTP to PII-UMP and PPi, while under higher glutamine levels, GlnD hydrolyzes PII-UMP to PII and UMP (deuridylylation). Thus, controls uridylylation state and activity of the PII proteins, and plays an important role in the regulation of nitrogen assimilation and metabolism. The protein is Bifunctional uridylyltransferase/uridylyl-removing enzyme of Vibrio campbellii (strain ATCC BAA-1116).